Reading from the N-terminus, the 301-residue chain is Acetylglutamate kinase (301 aa).

Substrate contacts are provided by residues 68–69, Arg-90, and Asn-195; that span reads GG.

It belongs to the acetylglutamate kinase family. ArgB subfamily.

Its subcellular location is the cytoplasm. It carries out the reaction N-acetyl-L-glutamate + ATP = N-acetyl-L-glutamyl 5-phosphate + ADP. The protein operates within amino-acid biosynthesis; L-arginine biosynthesis; N(2)-acetyl-L-ornithine from L-glutamate: step 2/4. In terms of biological role, catalyzes the ATP-dependent phosphorylation of N-acetyl-L-glutamate. This chain is Acetylglutamate kinase, found in Pseudomonas fluorescens (strain Pf0-1).